The following is a 642-amino-acid chain: MPAITLPDGSVRHYDAPVTGTTIAADIGPGLARAALAMKVDGRMMDLSRAIAADAQVVFVTRKDEAALEMIRHDAAHVLAEAVQELFPGTQVTIGPSIENGFYYDFARNEPFTPEDLPAIEAKMREIIARNAPFEREVWDRQDAIRFFQDKGEKYKAQLIQDLPDTETITVYRQGEWLDLCRGPHMRSTGDIGPAFRLMKVAGAYWRGDHRNAMLSRIYGTAWRDQKELDAYLHQLEEAERRDHRRLGKEMDLFHIQEEAVGSIFWHKKGWRLYRALENYMRRRQIEAGYEEVRTPQLVDRSLWEDSGHWDKYREHMFIATVEDEEKTLALKPMNCPCHVQIFRHGLRSYKELPLRMAEFGACHRYEPSGALHGIMRVRSFTQDDAHIFCMPEQIAKETADFVAMLASVYRDLGFDSFRVKFADRPESRAGKDEDWDRAEHELREACRLAGVEYELNPGEGAFYGPKLEFVLRDAIGRDWQCGTLQVDYVLPERLNAEYVAEDGARRRPVMLHRAILGSFERFIGILIEQYAGRFPLWLAPVPVVVAPIVSDANAYAMEVVTALKRAGVTWAEADLRNEKINAKIREHSLAHVPVILVVGRREAEQRQVALRRLGSQEQQVMALDEAISALATEATPPDLRQ.

The TGS domain occupies 1–61 (MPAITLPDGS…AADAQVVFVT (61 aa)). The catalytic stretch occupies residues 243 to 536 (DHRRLGKEMD…LIEQYAGRFP (294 aa)). Residues Cys-336, His-387, and His-513 each coordinate Zn(2+).

Belongs to the class-II aminoacyl-tRNA synthetase family. In terms of assembly, homodimer. Zn(2+) serves as cofactor.

Its subcellular location is the cytoplasm. It catalyses the reaction tRNA(Thr) + L-threonine + ATP = L-threonyl-tRNA(Thr) + AMP + diphosphate + H(+). Functionally, catalyzes the attachment of threonine to tRNA(Thr) in a two-step reaction: L-threonine is first activated by ATP to form Thr-AMP and then transferred to the acceptor end of tRNA(Thr). Also edits incorrectly charged L-seryl-tRNA(Thr). The polypeptide is Threonine--tRNA ligase (Granulibacter bethesdensis (strain ATCC BAA-1260 / CGDNIH1)).